Here is a 287-residue protein sequence, read N- to C-terminus: Myoblast determination protein 1 homolog B (287 aa).

One can recognise a bHLH domain in the interval 96 to 147 (DRRRAATMRERRRLSKVNDAFETLKRCTSTNPNQRLPKVDILRNAISYIDSL). Disordered regions lie at residues 161–202 (NMEH…FYTD) and 231–277 (QSPS…QLSH). Over residues 168 to 188 (DSDASSPSSNCSDGMNSPPCS) the composition is skewed to low complexity. Polar residues predominate over residues 267 to 277 (SPGNSCTQLSH).

As to quaternary structure, efficient DNA binding requires dimerization with another bHLH protein.

Its subcellular location is the nucleus. May act as a transcriptional activator that promotes transcription of muscle-specific target genes and plays a role in muscle differentiation. In Xenopus laevis (African clawed frog), this protein is Myoblast determination protein 1 homolog B (myod1-b).